A 654-amino-acid polypeptide reads, in one-letter code: Hepatocyte growth factor activator serine proteases (654 aa).

The signal sequence occupies residues 1-33 (MGRWAWGPSLCPLPGMALLLLLLLLLVPHGAQP). The interval 34 to 100 (QAGGNLTEPP…SSSPGDPVLT (67 aa)) is disordered. Positions 34 to 370 (QAGGNLTEPP…RLAACESLAR (337 aa)) are cleaved as a propeptide — removed in mature form. Residues Asn-38 and Asn-46 are each glycosylated (N-linked (GlcNAc...) asparagine). Residues 57–81 (PVTSVTPVTPATSAPEAQGPRGRGL) show a composition bias toward low complexity. A Fibronectin type-II domain is found at 101–148 (VDGQPCRFPFRYGGRMLHACTSEGSAHRKWCATTHNYDRDRAWGYCVQ). Intrachain disulfides connect Cys-106-Cys-131, Cys-120-Cys-146, Cys-162-Cys-173, Cys-167-Cys-184, Cys-186-Cys-195, Cys-200-Cys-228, Cys-226-Cys-235, Cys-243-Cys-254, Cys-248-Cys-265, Cys-267-Cys-276, Cys-284-Cys-365, Cys-305-Cys-347, Cys-336-Cys-360, Cys-393-Cys-520, Cys-431-Cys-447, Cys-439-Cys-509, Cys-534-Cys-603, Cys-566-Cys-582, and Cys-593-Cys-621. An EGF-like 1 domain is found at 158-196 (ALDSCASSPCLNGGSCSHTQDPGSYHCTCPMAFTGRNCD). In terms of domain architecture, Fibronectin type-I spans 198–238 (EKCFDETRYEHLEAGDRWARVSQGQVEQCECAGGQIRCEGT). Positions 239–277 (RHTACLSSPCLNGGTCHLIVATGTTVCSCPPGHAGRLCN) constitute an EGF-like 2 domain. Residues 283–365 (RCFVGNGTEY…SWEYCRLAAC (83 aa)) enclose the Kringle domain. A glycan (N-linked (GlcNAc...) asparagine) is linked at Asn-288. The region spanning 407 to 645 (IIGGSSSLPG…YVDWIKDRIW (239 aa)) is the Peptidase S1 domain. His-446 acts as the Charge relay system in catalysis. Residues Asn-467 and Asn-491 are each glycosylated (N-linked (GlcNAc...) asparagine). Asp-496 functions as the Charge relay system in the catalytic mechanism. Residue Asn-545 is glycosylated (N-linked (GlcNAc...) asparagine). Ser-597 (charge relay system) is an active-site residue.

Belongs to the peptidase S1 family. Heterodimer of a short chain and a long chain linked by a disulfide bond. The active form of HGFAC presents in the serum is derived from the COOH-terminal region of the precursor by the cleavage of bonds between Arg-370 and Ile-371 and Arg-406 and Ile-407. In terms of tissue distribution, liver.

The protein localises to the secreted. In terms of biological role, serine protease that hydrolyzes the inactive zymogen hepatocyte growth factor (HGFsc) to an activated disulfide-linked heterodimer, then initiating hepatocyte growth factor receptor signaling pathway. This Canis lupus familiaris (Dog) protein is Hepatocyte growth factor activator serine proteases (HGFAC).